A 261-amino-acid polypeptide reads, in one-letter code: Neurovirulence factor ICP34.5 (261 aa).

Positions 1-17 are enriched in basic residues; the sequence is MSRRRGPRRRGPRRRPR. The tract at residues 1-19 is required for nucleolar localization; the sequence is MSRRRGPRRRGPRRRPRPG. Disordered stretches follow at residues 1-59, 75-135, and 145-164; these read MSRR…SAPA, DSDD…LALR, and RLSL…APRG. 4 consecutive repeats follow at residues 3–7, 8–12, 16–23, and 24–31; these read RRRGP and PRPGAPAV. A 2 X 5 AA tandem repeats of R-R-R-G-P region spans residues 3–12; it reads RRRGPRRRGP. Residues 16–31 form a 2 X 8 AA tandem repeats of P-R-P-G-A-P-A-V region; that stretch reads PRPGAPAVPRPGAPAV. Over residues 18–32 the composition is skewed to pro residues; it reads PGAPAVPRPGAPAVP. The segment covering 75-88 has biased composition (acidic residues); sequence DSDDADYAGNDDAE. The segment covering 101–111 has biased composition (low complexity); the sequence is APEAPHAAPAA. The Nuclear export signal signature appears at 128–137; it reads LPPHLALRLR. A binding to PP1CA region spans residues 163–176; that stretch reads RGKVCFSPRVQVRH. Residues 163 to 176 are interaction with host PPP1CA; the sequence is RGKVCFSPRVQVRH. The important for interferon resistance stretch occupies residues 178–261; sequence VAWETAARLA…AAAGPGRRAV (84 aa). Positions 188–206 match the Bipartite nuclear localization signal motif; the sequence is RRGSWARERADRDRFRRRV. Residues 206-221 form an interaction with host EIF2S1/EIF-2ALPHA region; that stretch reads VAAAEAVIGPCLEPEA. The disordered stretch occupies residues 223 to 261; sequence ARARARARAHEDGGPAEEEEAAAAARGSSAAAGPGRRAV. The segment covering 244-261 has biased composition (low complexity); that stretch reads AAAARGSSAAAGPGRRAV.

Belongs to the PPP1R15 family. Interacts with host PPP1CA to form a high-molecular-weight complex that dephosphorylates EIF2S1/eIF-2alpha. Interacts with host EIF2S1/eIF-2alpha; this interaction is crucial for the specific dephosphorylation of EIF2S1/eIF-2alpha by PPP1CA.

The protein localises to the host cytoplasm. Its subcellular location is the host nucleus. It localises to the host nucleolus. It is found in the virion. Its function is as follows. Plays essential roles in viral nuclear egress to mediate capsid transit across the nuclear membrane and also in the inhibition of host immune response and integrated stress response (ISR). Facilitates nuclear egress cooperatively with host C1QBP and protein kinase C/PKC to induce lamin A/C phosphorylation and subsequent reorganization. In turn, lamina disassembles and nuclear egress occurs. Recruits the serine/threonine-protein phosphatase PPP1CA/PP1-alpha to dephosphorylate the translation initiation factor EIF2S1/eIF-2alpha, thereby couteracting the host shutoff of protein synthesis involving double-stranded RNA-dependent protein kinase EIF2AK2/PKR. Also down-modulates the host MHC class II proteins cell surface expression. Acts as a neurovirulence factor that has a profound effect on the growth of the virus in central nervous system tissue, probably through its ability to maintain an environment favorable for viral replication. The protein is Neurovirulence factor ICP34.5 (RL1) of Human herpesvirus 2 (strain HG52) (HHV-2).